An 88-amino-acid chain; its full sequence is Elongation factor 1-beta (88 aa).

This sequence belongs to the EF-1-beta/EF-1-delta family.

Its function is as follows. Promotes the exchange of GDP for GTP in EF-1-alpha/GDP, thus allowing the regeneration of EF-1-alpha/GTP that could then be used to form the ternary complex EF-1-alpha/GTP/AAtRNA. The polypeptide is Elongation factor 1-beta (ef1b) (Thermoplasma acidophilum (strain ATCC 25905 / DSM 1728 / JCM 9062 / NBRC 15155 / AMRC-C165)).